Consider the following 314-residue polypeptide: uncharacterized protein (314 aa).

The tract at residues 1-70 (MAGNSQRRGA…QGRHKKTDDT (70 aa)) is disordered. Positions 43–65 (QRPHHPAGKRAAKAARQAQGRHK) are enriched in basic residues. S-adenosyl-L-methionine contacts are provided by G265, I285, and L294.

This sequence belongs to the class IV-like SAM-binding methyltransferase superfamily. RNA methyltransferase TrmH family.

This is an uncharacterized protein from Mycolicibacterium vanbaalenii (strain DSM 7251 / JCM 13017 / BCRC 16820 / KCTC 9966 / NRRL B-24157 / PYR-1) (Mycobacterium vanbaalenii).